A 330-amino-acid polypeptide reads, in one-letter code: Probable WRKY transcription factor 74 (330 aa).

Positions 256–322 form a DNA-binding region, WRKY; the sequence is KIADIPPDEY…YEGEHNHSRI (67 aa).

Its subcellular location is the nucleus. In terms of biological role, transcription factor. Interacts specifically with the W box (5'-(T)TGAC[CT]-3'), a frequently occurring elicitor-responsive cis-acting element. The sequence is that of Probable WRKY transcription factor 74 (WRKY74) from Arabidopsis thaliana (Mouse-ear cress).